The primary structure comprises 72 residues: Pre-histone-like nucleoprotein (72 aa).

Residue S2 is modified to N-acetylserine; by host. The propeptide occupies 2 to 14 (SILISPSDNRGWG).

This sequence belongs to the adenoviridae histone-like nucleoprotein family. Interacts with the core-capsid bridging protein; this interaction bridges the virus core to the capsid. In terms of processing, cleaved near the N-terminus by the viral protease during virion maturation to form the mature protein.

The protein resides in the host nucleus. It is found in the host nucleolus. Its subcellular location is the virion. In terms of biological role, strongly bound to viral DNA and responsible for wrapping and condensing the viral DNA. Probably promotes viral genome import into the nucleus and is still associated with the viral DNA when the latter enters into the host nucleus. The polypeptide is Pre-histone-like nucleoprotein (Galliformes (FAdV-1)).